The primary structure comprises 212 residues: Imidazole glycerol phosphate synthase subunit HisH (212 aa).

The Glutamine amidotransferase type-1 domain occupies 2–212 (RVVVIDYNGG…ILGNFLRWTS (211 aa)). Cys-85 acts as the Nucleophile in catalysis. Residues His-192 and Glu-194 contribute to the active site.

In terms of assembly, heterodimer of HisH and HisF.

It is found in the cytoplasm. It catalyses the reaction 5-[(5-phospho-1-deoxy-D-ribulos-1-ylimino)methylamino]-1-(5-phospho-beta-D-ribosyl)imidazole-4-carboxamide + L-glutamine = D-erythro-1-(imidazol-4-yl)glycerol 3-phosphate + 5-amino-1-(5-phospho-beta-D-ribosyl)imidazole-4-carboxamide + L-glutamate + H(+). The catalysed reaction is L-glutamine + H2O = L-glutamate + NH4(+). Its pathway is amino-acid biosynthesis; L-histidine biosynthesis; L-histidine from 5-phospho-alpha-D-ribose 1-diphosphate: step 5/9. Its function is as follows. IGPS catalyzes the conversion of PRFAR and glutamine to IGP, AICAR and glutamate. The HisH subunit catalyzes the hydrolysis of glutamine to glutamate and ammonia as part of the synthesis of IGP and AICAR. The resulting ammonia molecule is channeled to the active site of HisF. This Gluconobacter oxydans (strain 621H) (Gluconobacter suboxydans) protein is Imidazole glycerol phosphate synthase subunit HisH.